Reading from the N-terminus, the 527-residue chain is Glutamyl-tRNA reductase 1, chloroplastic (527 aa).

The N-terminal 43 residues, 1 to 43 (MAGATSATAAAGAFAAAKARGPAAACPWLVAAGGRRRSGVVRC), are a transit peptide targeting the chloroplast. Residues 124–127 (TCNR), Ser-184, 189–191 (EGQ), and Gln-195 each bind substrate. Cys-125 serves as the catalytic Nucleophile. 266–271 (GAGKMG) contributes to the NADP(+) binding site.

Belongs to the glutamyl-tRNA reductase family. In terms of assembly, homodimer.

The protein resides in the plastid. It is found in the chloroplast. It carries out the reaction (S)-4-amino-5-oxopentanoate + tRNA(Glu) + NADP(+) = L-glutamyl-tRNA(Glu) + NADPH + H(+). Its pathway is porphyrin-containing compound metabolism; protoporphyrin-IX biosynthesis; 5-aminolevulinate from L-glutamyl-tRNA(Glu): step 1/2. Its function is as follows. Catalyzes the NADPH-dependent reduction of glutamyl-tRNA(Glu) to glutamate 1-semialdehyde (GSA). This chain is Glutamyl-tRNA reductase 1, chloroplastic (HEMA1), found in Hordeum vulgare (Barley).